A 2191-amino-acid polypeptide reads, in one-letter code: Genome polyprotein (2191 aa).

The N-myristoyl glycine; by host moiety is linked to residue G2. Residues 2–1501 (GAQVSTQKTG…HVSRAFICLQ (1500 aa)) are Cytoplasmic-facing. The interval 566 to 582 (FYQNDVQNAVERSIVRV) is amphipathic alpha-helix. Catalysis depends on for protease 2A activity residues H878 and D896. Zn(2+) is bound by residues C913 and C915. Residue C967 is the For protease 2A activity of the active site. Zn(2+)-binding residues include C973 and H975. The segment at 1107-1179 (NNGWLKKFTE…EQSAPSQSDQ (73 aa)) is membrane-binding. The segment at 1107-1245 (NNGWLKKFTE…SPGVGKSVAT (139 aa)) is oligomerization. An RNA-binding region spans residues 1128 to 1132 (AIKIQ). One can recognise an SF3 helicase domain in the interval 1211–1367 (EKKMSNYIQF…SMYNQNGKIN (157 aa)). C1375, C1387, and C1392 together coordinate Zn(2+). A C4-type; degenerate zinc finger spans residues 1375–1392 (CDEECCPVNFKKCCPLVC). The tract at residues 1419–1426 (EYNHRHSV) is RNA-binding. Residues 1430 to 1435 (LEALFQ) are oligomerization. An intramembrane segment occupies 1502–1517 (ALTTFVSVAGIIYIIY). At 1518–2191 (KLFAGFQGAY…TLRRKWLDSF (674 aa)) the chain is on the cytoplasmic side. Y1527 is modified (O-(5'-phospho-RNA)-tyrosine). Residues 1547-1725 (GPAFEFAVAM…FSAALLKHYF (179 aa)) form the Peptidase C3 domain. Catalysis depends on for protease 3C activity residues H1586, E1617, and C1693. In terms of domain architecture, RdRp catalytic spans 1956–2072 (GHLIAFDYSG…SYPWPIDASL (117 aa)). D1962 and D2058 together coordinate Mg(2+).

This sequence belongs to the picornaviruses polyprotein family. In terms of assembly, interacts with capsid protein VP1 and capsid protein VP3 to form heterotrimeric protomers. Interacts with capsid protein VP0, and capsid protein VP3 to form heterotrimeric protomers. Five protomers subsequently associate to form pentamers which serve as building blocks for the capsid. Interacts with capsid protein VP2, capsid protein VP3 and capsid protein VP4 following cleavage of capsid protein VP0. Interacts with host CD55 and FCGRT; these interactions promote virus attachment to the host cell and subsequent internalization. As to quaternary structure, interacts with capsid protein VP1 and capsid protein VP3 in the mature capsid. Interacts with host CD55 and FCGRT; these interactions promote virus attachment to the host cell and subsequent internalization. In terms of assembly, interacts with capsid protein VP0 and capsid protein VP1 to form heterotrimeric protomers. Five protomers subsequently associate to form pentamers which serve as building blocks for the capsid. Interacts with capsid protein VP4 in the mature capsid. Interacts with protein 2C; this interaction may be important for virion morphogenesis. Interacts with host FCGRT; this interaction promotes virus attachment to the host cell and subsequent internalization. Interacts with capsid protein VP1 and capsid protein VP3. As to quaternary structure, homodimer. In terms of assembly, homohexamer; forms a hexameric ring structure with 6-fold symmetry characteristic of AAA+ ATPases. Interacts (via N-terminus) with host RTN3 (via reticulon domain); this interaction is important for viral replication. Interacts with capsid protein VP3; this interaction may be important for virion morphogenesis. Interacts with protein 3CD. As to quaternary structure, homodimer. Interacts with host GBF1. Interacts (via GOLD domain) with host ACBD3 (via GOLD domain); this interaction allows the formation of a viral protein 3A/ACBD3 heterotetramer with a 2:2 stoichiometry, which will stimulate the recruitment of host PI4KB in order to synthesize PI4P at the viral RNA replication sites. In terms of assembly, interacts with RNA-directed RNA polymerase. Interacts with protein 3AB and with RNA-directed RNA polymerase. As to quaternary structure, interacts with Viral protein genome-linked and with protein 3CD. The cofactor is Mg(2+). Post-translationally, specific enzymatic cleavages in vivo by the viral proteases yield processing intermediates and the mature proteins. In terms of processing, myristoylation is required for the formation of pentamers during virus assembly. Further assembly of 12 pentamers and a molecule of genomic RNA generates the provirion. During virion maturation, immature virions are rendered infectious following cleavage of VP0 into VP4 and VP2. This maturation seems to be an autocatalytic event triggered by the presence of RNA in the capsid and it is followed by a conformational change infectious virion. Post-translationally, myristoylation is required during RNA encapsidation and formation of the mature virus particle. In terms of processing, VPg is uridylylated by the polymerase into VPg-pUpU. This acts as a nucleotide-peptide primer for the genomic RNA replication.

The protein localises to the virion. Its subcellular location is the host cytoplasm. It localises to the host cytoplasmic vesicle membrane. It is found in the host nucleus. The enzyme catalyses a ribonucleoside 5'-triphosphate + H2O = a ribonucleoside 5'-diphosphate + phosphate + H(+). It catalyses the reaction Selective cleavage of Tyr-|-Gly bond in the picornavirus polyprotein.. It carries out the reaction RNA(n) + a ribonucleoside 5'-triphosphate = RNA(n+1) + diphosphate. The catalysed reaction is Selective cleavage of Gln-|-Gly bond in the poliovirus polyprotein. In other picornavirus reactions Glu may be substituted for Gln, and Ser or Thr for Gly.. Replication or transcription is subject to high level of random mutations by the nucleotide analog ribavirin. Its function is as follows. Forms an icosahedral capsid of pseudo T=3 symmetry with capsid proteins VP2 and VP3. The capsid is 300 Angstroms in diameter, composed of 60 copies of each capsid protein and enclosing the viral positive strand RNA genome. Capsid protein VP1 mainly forms the vertices of the capsid. Capsid protein VP1 interacts with host cell receptor to provide virion attachment to target host cells. This attachment induces virion internalization. Tyrosine kinases are probably involved in the entry process. After binding to its receptor, the capsid undergoes conformational changes. Capsid protein VP1 N-terminus (that contains an amphipathic alpha-helix) and capsid protein VP4 are externalized. Together, they shape a pore in the host membrane through which viral genome is translocated to host cell cytoplasm. Functionally, forms an icosahedral capsid of pseudo T=3 symmetry with capsid proteins VP2 and VP3. The capsid is 300 Angstroms in diameter, composed of 60 copies of each capsid protein and enclosing the viral positive strand RNA genome. In terms of biological role, lies on the inner surface of the capsid shell. After binding to the host receptor, the capsid undergoes conformational changes. Capsid protein VP4 is released, Capsid protein VP1 N-terminus is externalized, and together, they shape a pore in the host membrane through which the viral genome is translocated into the host cell cytoplasm. Component of immature procapsids, which is cleaved into capsid proteins VP4 and VP2 after maturation. Allows the capsid to remain inactive before the maturation step. Its function is as follows. Cysteine protease that cleaves viral polyprotein and specific host proteins. It is responsible for the autocatalytic cleavage between the P1 and P2 regions, which is the first cleavage occurring in the polyprotein. Also cleaves the host translation initiation factor EIF4G1, in order to shut down the capped cellular mRNA translation. Inhibits the host nucleus-cytoplasm protein and RNA trafficking by cleaving host members of the nuclear pores. Counteracts stress granule formation probably by antagonizing its assembly or promoting its dissassembly. Functionally, plays an essential role in the virus replication cycle by acting as a viroporin. Creates a pore in the host endoplasmic reticulum and as a consequence releases Ca2+ in the cytoplasm of infected cell. In turn, high levels of cytoplasmic calcium may trigger membrane trafficking and transport of viral ER-associated proteins to viroplasms, sites of viral genome replication. In terms of biological role, induces and associates with structural rearrangements of intracellular membranes. Displays RNA-binding, nucleotide binding and NTPase activities. May play a role in virion morphogenesis and viral RNA encapsidation by interacting with the capsid protein VP3. Localizes the viral replication complex to the surface of membranous vesicles. Together with protein 3CD binds the Cis-Active RNA Element (CRE) which is involved in RNA synthesis initiation. Acts as a cofactor to stimulate the activity of 3D polymerase, maybe through a nucleid acid chaperone activity. Its function is as follows. Localizes the viral replication complex to the surface of membranous vesicles. It inhibits host cell endoplasmic reticulum-to-Golgi apparatus transport and causes the disassembly of the Golgi complex, possibly through GBF1 interaction. This would result in depletion of MHC, trail receptors and IFN receptors at the host cell surface. Plays an essential role in viral RNA replication by recruiting ACBD3 and PI4KB at the viral replication sites, thereby allowing the formation of the rearranged membranous structures where viral replication takes place. Functionally, acts as a primer for viral RNA replication and remains covalently bound to viral genomic RNA. VPg is uridylylated prior to priming replication into VPg-pUpU. The oriI viral genomic sequence may act as a template for this. The VPg-pUpU is then used as primer on the genomic RNA poly(A) by the RNA-dependent RNA polymerase to replicate the viral genome. During genome replication, the VPg-RNA linkage is removed by the host TDP2, thereby accelerating replication. During the late stage of the replication cycle, host TDP2 is excluded from sites of viral RNA synthesis and encapsidation, allowing for the generation of progeny virions. In terms of biological role, involved in the viral replication complex and viral polypeptide maturation. It exhibits protease activity with a specificity and catalytic efficiency that is different from protease 3C. Protein 3CD binds to the 5'UTR of the viral genome. Replicates the viral genomic RNA on the surface of intracellular membranes. May form linear arrays of subunits that propagate along a strong head-to-tail interaction called interface-I. Covalently attaches UMP to a tyrosine of VPg, which is used to prime RNA synthesis. The positive stranded RNA genome is first replicated at virus induced membranous vesicles, creating a dsRNA genomic replication form. This dsRNA is then used as template to synthesize positive stranded RNA genomes. ss(+)RNA genomes are either translated, replicated or encapsidated. Its function is as follows. Major viral protease that mediates proteolytic processing of the polyprotein. Cleaves host EIF5B, contributing to host translation shutoff. Also cleaves host PABPC1, contributing to host translation shutoff. Cleaves host NLRP1, triggers host N-glycine-mediated degradation of the autoinhibitory NLRP1 N-terminal fragment. The polypeptide is Genome polyprotein (Echovirus 6 (strain Charles)).